A 147-amino-acid polypeptide reads, in one-letter code: uncharacterized protein (147 aa).

To M.jannaschii MJ1086 N-terminal region.

This is an uncharacterized protein from Methanocaldococcus jannaschii (strain ATCC 43067 / DSM 2661 / JAL-1 / JCM 10045 / NBRC 100440) (Methanococcus jannaschii).